The chain runs to 593 residues: Zinc metalloproteinase-disintegrin-like atrase-B (593 aa).

A signal peptide spans 1-20; the sequence is MIQALLVIICLAVFPHQGSS. A propeptide spanning residues 21-191 is cleaved from the precursor; the sequence is IILESGNVND…DESIEKTSQL (171 aa). The 196-residue stretch at 205-400 folds into the Peptidase M12B domain; sequence KYIEFYVIVD…DRPQCILNKP (196 aa). E208 and D292 together coordinate Ca(2+). 3 disulfide bridges follow: C316-C395, C356-C379, and C358-C363. N319 is a glycosylation site (N-linked (GlcNAc...) asparagine). Zn(2+) is bound at residue H341. Residue E342 is part of the active site. H345 and H351 together coordinate Zn(2+). 8 residues coordinate Ca(2+): C395, N398, I410, N413, F415, E417, E420, and D423. In terms of domain architecture, Disintegrin spans 408-477; the sequence is PPICGNYFVE…ECPTDSLQRN (70 aa). Disulfide bonds link C422–C435, C424–C430, C434–C440, C449–C469, C456–C488, C481–C493, C500–C550, C515–C558, C528–C538, C545–C581, and C575–C586. The D/ECD-tripeptide signature appears at 455-457; that stretch reads DCD. 4 residues coordinate Ca(2+): D457, L458, E460, and D472. The N-linked (GlcNAc...) asparagine glycan is linked to N490.

It belongs to the venom metalloproteinase (M12B) family. P-III subfamily. P-IIIa sub-subfamily. In terms of assembly, monomer. The cofactor is Zn(2+). In terms of tissue distribution, expressed by the venom gland.

The protein localises to the secreted. Inhibited by EDTA, EGTA, 1,10-phenanthroline and DTT. Not inhibited by PMSF and SBTI. Snake venom zinc protease that inhibits the classical and alternative pathways of complement by cleaving factor B, C6, C7, and C8. Also slowly and selectively degrades alpha-chain of fibrinogen (FGA), and shows edema-inducing activity. The chain is Zinc metalloproteinase-disintegrin-like atrase-B from Naja atra (Chinese cobra).